The primary structure comprises 457 residues: Bifunctional protein GlmU (457 aa).

The interval 1–229 (MYNCAIILAA…YEEIMGVNSR (229 aa)) is pyrophosphorylase. Residues 8–11 (LAAG), Lys22, Gln73, and 78–79 (GT) contribute to the UDP-N-acetyl-alpha-D-glucosamine site. Position 103 (Asp103) interacts with Mg(2+). UDP-N-acetyl-alpha-D-glucosamine contacts are provided by Gly140, Glu155, Asn170, and Asn227. Residue Asn227 participates in Mg(2+) binding. The linker stretch occupies residues 230–250 (VQLSEAEIVMRKRINHKHMVN). The interval 251–457 (GVTFIDCEST…WLDKKGLLKK (207 aa)) is N-acetyltransferase. Residues Arg332 and Lys350 each coordinate UDP-N-acetyl-alpha-D-glucosamine. The active-site Proton acceptor is the His362. Positions 365 and 376 each coordinate UDP-N-acetyl-alpha-D-glucosamine. Residues 385–386 (NY), Ala422, and Arg439 each bind acetyl-CoA.

In the N-terminal section; belongs to the N-acetylglucosamine-1-phosphate uridyltransferase family. This sequence in the C-terminal section; belongs to the transferase hexapeptide repeat family. As to quaternary structure, homotrimer. Mg(2+) serves as cofactor.

It is found in the cytoplasm. It carries out the reaction alpha-D-glucosamine 1-phosphate + acetyl-CoA = N-acetyl-alpha-D-glucosamine 1-phosphate + CoA + H(+). The catalysed reaction is N-acetyl-alpha-D-glucosamine 1-phosphate + UTP + H(+) = UDP-N-acetyl-alpha-D-glucosamine + diphosphate. It functions in the pathway nucleotide-sugar biosynthesis; UDP-N-acetyl-alpha-D-glucosamine biosynthesis; N-acetyl-alpha-D-glucosamine 1-phosphate from alpha-D-glucosamine 6-phosphate (route II): step 2/2. It participates in nucleotide-sugar biosynthesis; UDP-N-acetyl-alpha-D-glucosamine biosynthesis; UDP-N-acetyl-alpha-D-glucosamine from N-acetyl-alpha-D-glucosamine 1-phosphate: step 1/1. The protein operates within bacterial outer membrane biogenesis; LPS lipid A biosynthesis. In terms of biological role, catalyzes the last two sequential reactions in the de novo biosynthetic pathway for UDP-N-acetylglucosamine (UDP-GlcNAc). The C-terminal domain catalyzes the transfer of acetyl group from acetyl coenzyme A to glucosamine-1-phosphate (GlcN-1-P) to produce N-acetylglucosamine-1-phosphate (GlcNAc-1-P), which is converted into UDP-GlcNAc by the transfer of uridine 5-monophosphate (from uridine 5-triphosphate), a reaction catalyzed by the N-terminal domain. The polypeptide is Bifunctional protein GlmU (Clostridium botulinum (strain Langeland / NCTC 10281 / Type F)).